The chain runs to 184 residues: Large ribosomal subunit protein uL6 (184 aa).

This sequence belongs to the universal ribosomal protein uL6 family. Part of the 50S ribosomal subunit.

This protein binds to the 23S rRNA, and is important in its secondary structure. It is located near the subunit interface in the base of the L7/L12 stalk, and near the tRNA binding site of the peptidyltransferase center. In Thermotoga neapolitana (strain ATCC 49049 / DSM 4359 / NBRC 107923 / NS-E), this protein is Large ribosomal subunit protein uL6.